Consider the following 932-residue polypeptide: Beta-mannosidase A (932 aa).

Positions 1–19 (MRVPAQATIAVLASAVSSP) are cleaved as a signal peptide. 9 N-linked (GlcNAc...) asparagine glycosylation sites follow: Asn41, Asn81, Asn94, Asn249, Asn261, Asn284, Asn289, Asn318, and Asn348. Glu480 serves as the catalytic Proton donor. Residues Asn538, Asn551, Asn609, Asn624, Asn632, Asn659, Asn739, and Asn791 are each glycosylated (N-linked (GlcNAc...) asparagine).

It belongs to the glycosyl hydrolase 2 family. Beta-mannosidase A subfamily. Homodimer.

Its subcellular location is the secreted. The catalysed reaction is Hydrolysis of terminal, non-reducing beta-D-mannose residues in beta-D-mannosides.. The protein operates within glycan metabolism; N-glycan degradation. In terms of biological role, exoglycosidase that cleaves the single beta-linked mannose residue from the non-reducing end of beta-mannosidic oligosaccharides of various complexity and length. Involved in the degradation of polymeric mannan and galactomannan. The polypeptide is Beta-mannosidase A (mndA) (Aspergillus terreus (strain NIH 2624 / FGSC A1156)).